Consider the following 604-residue polypeptide: Glutamine--fructose-6-phosphate aminotransferase [isomerizing] (604 aa).

Cys2 (nucleophile; for GATase activity) is an active-site residue. Positions 2–219 (CGIMGAVSER…EGDSACVTTQ (218 aa)) constitute a Glutamine amidotransferase type-2 domain. SIS domains lie at 279-427 (LRAS…DNRA) and 454-594 (LASL…VDQP). Lys599 functions as the For Fru-6P isomerization activity in the catalytic mechanism.

In terms of assembly, homodimer.

The protein localises to the cytoplasm. The catalysed reaction is D-fructose 6-phosphate + L-glutamine = D-glucosamine 6-phosphate + L-glutamate. Functionally, catalyzes the first step in hexosamine metabolism, converting fructose-6P into glucosamine-6P using glutamine as a nitrogen source. The sequence is that of Glutamine--fructose-6-phosphate aminotransferase [isomerizing] from Legionella pneumophila (strain Lens).